Consider the following 146-residue polypeptide: Hemoglobin subunit beta (146 aa).

Valine 1 carries the N-acetylvaline modification. Residues 2 to 146 enclose the Globin domain; the sequence is HLTAEEKDAV…VANALAHRYH (145 aa). Serine 44 is modified (phosphoserine). Lysine 59 is subject to N6-acetyllysine. Histidine 63 serves as a coordination point for heme b. Lysine 82 carries the N6-acetyllysine modification. Histidine 92 contacts heme b. Cysteine 93 carries the post-translational modification S-nitrosocysteine.

It belongs to the globin family. In terms of assembly, heterotetramer of two alpha chains and two beta chains. Red blood cells.

Functionally, involved in oxygen transport from the lung to the various peripheral tissues. The protein is Hemoglobin subunit beta (HBB) of Hippopotamus amphibius (Hippopotamus).